We begin with the raw amino-acid sequence, 486 residues long: 3-dehydroshikimate dehydratase (486 aa).

The enzyme catalyses 3-dehydroshikimate = 3,4-dihydroxybenzoate + H2O. Its pathway is aromatic compound metabolism; 3,4-dihydroxybenzoate biosynthesis; 3,4-dihydroxybenzoate from 3-dehydroquinate: step 2/2. In terms of biological role, converts dehydroshikimate to protocatechuate. The sequence is that of 3-dehydroshikimate dehydratase (quiC) from Acinetobacter baylyi (strain ATCC 33305 / BD413 / ADP1).